A 56-amino-acid chain; its full sequence is Ovomucoid (56 aa).

Residues 6–56 (VDCSEYPKPECTAEERPICGSDNKTYGNKCNFCNAVVESNGTLTLRNFGKC) enclose the Kazal-like domain. 3 disulfide bridges follow: Cys8/Cys38, Cys16/Cys35, and Cys24/Cys56. N-linked (GlcNAc...) asparagine glycosylation occurs at Asn45.

The protein resides in the secreted. This is Ovomucoid from Bambusicola thoracicus (Chinese bamboo-partridge).